The following is a 275-amino-acid chain: Putative phosphoenolpyruvate synthase regulatory protein (275 aa).

Gly157–Thr164 lines the ADP pocket.

This sequence belongs to the pyruvate, phosphate/water dikinase regulatory protein family. PSRP subfamily.

It carries out the reaction [pyruvate, water dikinase] + ADP = [pyruvate, water dikinase]-phosphate + AMP + H(+). It catalyses the reaction [pyruvate, water dikinase]-phosphate + phosphate + H(+) = [pyruvate, water dikinase] + diphosphate. Bifunctional serine/threonine kinase and phosphorylase involved in the regulation of the phosphoenolpyruvate synthase (PEPS) by catalyzing its phosphorylation/dephosphorylation. In Bordetella pertussis (strain Tohama I / ATCC BAA-589 / NCTC 13251), this protein is Putative phosphoenolpyruvate synthase regulatory protein.